Here is an 82-residue protein sequence, read N- to C-terminus: Protein ImpC (82 aa).

The protein belongs to the DinI family.

In terms of biological role, the imp operon is involved in UV protection and mutation, however the ImpC protein is not essential for these functions. The sequence is that of Protein ImpC (impC) from Salmonella typhimurium.